The primary structure comprises 167 residues: Cytochrome c-type biogenesis protein CcmE (167 aa).

The Cytoplasmic portion of the chain corresponds to 1–7 (MTRKTRR). Residues 8–28 (LWIVIACLACVGSAAALTLRA) traverse the membrane as a helical; Signal-anchor for type II membrane protein segment. Over 29 to 167 (FSSNIVFFMA…DTMTAKKAGG (139 aa)) the chain is Periplasmic. Heme is bound by residues His125 and Tyr129. Positions 141-150 (TGKWDPRFGK) are enriched in basic and acidic residues. Residues 141–167 (TGKWDPRFGKAPDASSWDTMTAKKAGG) form a disordered region.

It belongs to the CcmE/CycJ family.

It is found in the cell inner membrane. In terms of biological role, heme chaperone required for the biogenesis of c-type cytochromes. Transiently binds heme delivered by CcmC and transfers the heme to apo-cytochromes in a process facilitated by CcmF and CcmH. The sequence is that of Cytochrome c-type biogenesis protein CcmE from Gluconobacter oxydans (strain 621H) (Gluconobacter suboxydans).